The chain runs to 268 residues: Glucosamine-6-phosphate deaminase (268 aa).

The active-site Proton acceptor; for enolization step is aspartate 72. The active-site For ring-opening step is the aspartate 141. The active-site Proton acceptor; for ring-opening step is the histidine 143. The For ring-opening step role is filled by glutamate 148.

It belongs to the glucosamine/galactosamine-6-phosphate isomerase family. NagB subfamily.

The enzyme catalyses alpha-D-glucosamine 6-phosphate + H2O = beta-D-fructose 6-phosphate + NH4(+). It participates in amino-sugar metabolism; N-acetylneuraminate degradation; D-fructose 6-phosphate from N-acetylneuraminate: step 5/5. Allosterically activated by N-acetylglucosamine 6-phosphate (GlcNAc6P). Catalyzes the reversible isomerization-deamination of glucosamine 6-phosphate (GlcN6P) to form fructose 6-phosphate (Fru6P) and ammonium ion. In Borrelia garinii subsp. bavariensis (strain ATCC BAA-2496 / DSM 23469 / PBi) (Borreliella bavariensis), this protein is Glucosamine-6-phosphate deaminase.